The chain runs to 94 residues: Integration host factor subunit beta (94 aa).

The protein belongs to the bacterial histone-like protein family. In terms of assembly, heterodimer of an alpha and a beta chain.

Functionally, this protein is one of the two subunits of integration host factor, a specific DNA-binding protein that functions in genetic recombination as well as in transcriptional and translational control. The chain is Integration host factor subunit beta from Actinobacillus succinogenes (strain ATCC 55618 / DSM 22257 / CCUG 43843 / 130Z).